We begin with the raw amino-acid sequence, 107 residues long: uncharacterized protein (107 aa).

This is an uncharacterized protein from Bacillus subtilis (strain 168).